The primary structure comprises 252 residues: 5'-nucleotidase SurE (252 aa).

A divalent metal cation is bound by residues D8, D9, S39, and N91.

This sequence belongs to the SurE nucleotidase family. A divalent metal cation serves as cofactor.

It is found in the cytoplasm. It catalyses the reaction a ribonucleoside 5'-phosphate + H2O = a ribonucleoside + phosphate. In terms of biological role, nucleotidase that shows phosphatase activity on nucleoside 5'-monophosphates. This chain is 5'-nucleotidase SurE, found in Legionella pneumophila (strain Paris).